Reading from the N-terminus, the 430-residue chain is Probable acetate kinase (430 aa).

Position 12 (N12) interacts with Mg(2+). Position 19 (K19) interacts with ATP. R100 serves as a coordination point for substrate. The Proton donor/acceptor role is filled by D159. 220-224 (HLGSG) lines the ATP pocket. E416 serves as a coordination point for Mg(2+).

The protein belongs to the acetokinase family. Requires Mg(2+) as cofactor.

It catalyses the reaction acetate + ATP = acetyl phosphate + ADP. Its pathway is metabolic intermediate biosynthesis; acetyl-CoA biosynthesis; acetyl-CoA from acetate: step 1/2. The chain is Probable acetate kinase from Cryptococcus neoformans var. neoformans serotype D (strain B-3501A) (Filobasidiella neoformans).